We begin with the raw amino-acid sequence, 827 residues long: Transcription factor SOX-6 (827 aa).

The span at 1-10 (MSSKQATSPF) shows a compositional bias: polar residues. The tract at residues 1 to 51 (MSSKQATSPFACTVDGEETMTQDLTSREKEEGSDQHPASHLPLHPIMHNKP) is disordered. The segment covering 25–34 (TSREKEEGSD) has biased composition (basic and acidic residues). Residue threonine 119 is modified to Phosphothreonine. Residues 184–257 (LAEKERQLST…QHKINLLQQQ (74 aa)) are a coiled coil. Disordered regions lie at residues 329-360 (HVSH…GGHS) and 380-470 (SPGA…PIGG). The span at 341–357 (GISDRLGRNLDPYEHGG) shows a compositional bias: basic and acidic residues. Serine 399 is subject to Phosphoserine. Threonine 401 is modified (phosphothreonine). Residues lysine 404 and lysine 417 each participate in a glycyl lysine isopeptide (Lys-Gly) (interchain with G-Cter in SUMO) cross-link. Composition is skewed to polar residues over residues 421-431 (TAQPLNLSSRP) and 439-461 (SPTS…LPNK). 2 positions are modified to phosphoserine: serine 439 and serine 442. Positions 620 to 688 (IKRPMNAFMV…IHLEKYPNYK (69 aa)) form a DNA-binding region, HMG box. 2 disordered regions span residues 752–772 (TPSP…EPSL) and 786–827 (ASLA…VSAN). The segment covering 795 to 808 (NGEDEMEAYDDYED) has biased composition (acidic residues).

As to quaternary structure, homodimer. Interacts with DAZAP2. May interact with CENPK. In terms of processing, sumoylation inhibits the transcriptional activity.

It localises to the nucleus. The protein localises to the cytoplasm. Transcription factor that plays a key role in several developmental processes, including neurogenesis, chondrocytes differentiation and cartilage formation. Specifically binds the 5'-AACAAT-3' DNA motif present in enhancers and super-enhancers and promotes expression of genes important for chondrogenesis. Required for overt chondrogenesis when condensed prechondrocytes differentiate into early stage chondrocytes: SOX5 and SOX6 cooperatively bind with SOX9 on active enhancers and super-enhancers associated with cartilage-specific genes, and thereby potentiate SOX9's ability to transactivate. Not involved in precartilaginous condensation, the first step in chondrogenesis, during which skeletal progenitors differentiate into prechondrocytes. Together with SOX5, required to form and maintain a pool of highly proliferating chondroblasts between epiphyses and metaphyses, to form columnar chondroblasts, delay chondrocyte prehypertrophy but promote hypertrophy, and to delay terminal differentiation of chondrocytes on contact with ossification fronts. Binds to the proximal promoter region of the myelin protein MPZ gene, and is thereby involved in the differentiation of oligodendroglia in the developing spinal tube. Binds to the gene promoter of MBP and acts as a transcriptional repressor. In Rattus norvegicus (Rat), this protein is Transcription factor SOX-6.